The chain runs to 566 residues: Sister chromatid cohesion protein 1 (566 aa).

A Phosphoserine modification is found at Ser-161. Ser-175 carries the phosphoserine; by CDC5 modification. N6-acetyllysine; by ECO1 is present on Lys-210. At Ser-263 the chain carries Phosphoserine; by CDC5. A Phosphoserine modification is found at Ser-307. The segment at 325 to 356 is disordered; sequence SIQIDEETENSESIASSNTYKEERSNNLLTPQ. Thr-354 is modified (phosphothreonine).

It belongs to the rad21 family. In terms of assembly, interacts directly with IRR1/SCC3 in cohesin complex. Cohesin complexes are composed of the SMC1 and SMC3 heterodimer attached via their hinge domain, MCD1/SCC1 which link them, and IRR1, which interacts with MCD1. The cohesin complex also interacts with SCC2, which is required for its association with chromosomes. Post-translationally, cleaved by ESP1 at the onset of anaphase. In terms of processing, phosphorylated by CDC5/Polo-like kinase at the onset of anaphase. Phosphorylation takes places at proximity to cleavage sites and is required for an efficient cleavage by ESP1. Acetylated by ECO1.

The protein resides in the nucleus. Its subcellular location is the chromosome. It is found in the centromere. Functionally, cleavable component of the cohesin complex involved in chromosome cohesion during cell cycle. The cohesin complex is required for the cohesion of sister chromatids after DNA replication. The cohesin complex apparently forms a large proteinaceous ring within which sister chromatids can be trapped. At metaphase-anaphase transition, this protein is cleaved by ESP1 and dissociates from chromatin, allowing sister chromatids to segregate. This is Sister chromatid cohesion protein 1 (MCD1) from Saccharomyces cerevisiae (strain ATCC 204508 / S288c) (Baker's yeast).